A 522-amino-acid chain; its full sequence is MYPFNRTTSIHAESASQHIDELDDDDFGRSNGKFYSNRHSQMDSDVVAHQVPPGSPVEKTILASILEMSTINDMWVKTFTAPGANKKDKKRRESLFECSWRGVHCVSNSLRSILFLFRLLAIFPATTDRKSRRKRNHRSIIKLILYVNYIVLAVLLNSFLIKMNFKVLMLYKHKFGLMHTGTVASMITATKPVINVFVIVLSAIKFKSHQRLLKTIDMVDVCFRSAFGVSPPLRIYKFVFFFTLLIIFFSALILKVVEFVGTGEIFGEHILTDCSFILVPVLSLWNIIPLLYYHLYNILVRFYCRTLIKSMNREHKKRHFSLKFYYEQFTRITNVQEAVGDVFNPLLLFSLAWSLLVLCLTLYFLSEPTSTLLVPITPEQVTNPKIREKLNITVHVKICWAAYQVVMAILHIIIICSTGMMTNETTRQIVNAVLRIVPDANADLDRFQISCFVHKMTTQFMWGMTVWRAFPLERTTFFTLISVIVTYSLLLFRFKDDMVQNPPYMAAMAVFNTSAVPTPAPG.

The next 7 helical transmembrane spans lie at 140-160, 184-204, 238-258, 276-296, 345-365, 398-418, and 472-492; these read IIKL…NSFL, ASMI…LSAI, FVFF…KVVE, FILV…YHLY, PLLL…LYFL, ICWA…ICST, and LERT…LLLF.

The protein belongs to the G-protein coupled receptor family. Expressed in some neurons in the head, the HSN neurons and the PVQ interneurons of the tail.

Its subcellular location is the membrane. Functionally, orphan receptor. Regulates egg-laying probably by activating guanine nucleotide-binding protein goa-1, in the hermaphrodite-specific neurons (HSNs). In Caenorhabditis elegans, this protein is Probable G-protein coupled receptor egl-47.